Here is a 287-residue protein sequence, read N- to C-terminus: Flagellin (287 aa).

It belongs to the bacterial flagellin family.

Its subcellular location is the secreted. The protein resides in the bacterial flagellum. Its function is as follows. Flagellin is the subunit protein which polymerizes to form the filaments of bacterial flagella. This Listeria innocua serovar 6a (strain ATCC BAA-680 / CLIP 11262) protein is Flagellin (flaA).